A 196-amino-acid polypeptide reads, in one-letter code: Superoxide dismutase [Fe] (196 aa).

Residues H20, H68, D157, and H161 each contribute to the Fe cation site.

Belongs to the iron/manganese superoxide dismutase family. In terms of assembly, homotetramer. Fe cation is required as a cofactor.

It carries out the reaction 2 superoxide + 2 H(+) = H2O2 + O2. In terms of biological role, destroys superoxide anion radicals which are normally produced within the cells and which are toxic to biological systems. The polypeptide is Superoxide dismutase [Fe] (Tetrahymena pyriformis).